The chain runs to 142 residues: Hemoglobin subunit alpha-A (142 aa).

The Globin domain occupies 2–142 (VLSAADKTNV…VGAVLTAKYR (141 aa)). Histidine 59 lines the O2 pocket. Histidine 88 contacts heme b.

It belongs to the globin family. In terms of assembly, heterotetramer of two alpha chains and two beta chains. As to expression, red blood cells.

Functionally, involved in oxygen transport from the lung to the various peripheral tissues. In Anas platyrhynchos (Mallard), this protein is Hemoglobin subunit alpha-A (HBAA).